A 362-amino-acid polypeptide reads, in one-letter code: dTDP-glucose 4,6-dehydratase (362 aa).

NAD(+) contacts are provided by residues 11 to 12 (FI), 32 to 35 (DKLT), 58 to 59 (DI), 80 to 84 (LAAES), and Thr99. Substrate is bound at residue Ser84. A substrate-binding site is contributed by Thr133. The active-site Proton donor is the Asp134. Catalysis depends on proton acceptor residues Glu135 and Tyr167. 167 to 171 (YSASK) is a binding site for NAD(+). Asn196 provides a ligand contact to substrate. Asn197 contributes to the NAD(+) binding site. Substrate is bound by residues 206-207 (KL), 222-224 (PVY), Arg231, Asn266, and 300-304 (DRPGH).

It belongs to the NAD(P)-dependent epimerase/dehydratase family. dTDP-glucose dehydratase subfamily. The cofactor is NAD(+).

It catalyses the reaction dTDP-alpha-D-glucose = dTDP-4-dehydro-6-deoxy-alpha-D-glucose + H2O. Its pathway is bacterial outer membrane biogenesis; LPS O-antigen biosynthesis. Functionally, catalyzes the dehydration of dTDP-D-glucose to form dTDP-4-dehydro-6-deoxy-D-glucose via a three-step process involving oxidation, dehydration and reduction. This reaction is a step in the biosynthesis of D-fucofuranose, a component of E.coli O52 O antigen. The chain is dTDP-glucose 4,6-dehydratase (rmlB) from Escherichia coli.